Here is a 194-residue protein sequence, read N- to C-terminus: Histone H1.0 (194 aa).

At methionine 1 the chain carries N-acetylmethionine. A disordered region spans residues 1 to 26 (MTENSTSTPAAKPKRAKAAKKSTDHP). N-acetylthreonine; in Histone H1.0, N-terminally processed is present on threonine 2. In terms of domain architecture, H15 spans 24 to 97 (DHPKYSDMIV…GASGSFRLAK (74 aa)). The residue at position 42 (arginine 42) is a Citrulline. The disordered stretch occupies residues 86-194 (GVGASGSFRL…SSAKRASKKK (109 aa)). Serine 104 carries the post-translational modification ADP-ribosylserine. Residues 105-194 (VAFKKTKKEV…SSAKRASKKK (90 aa)) are compositionally biased toward basic residues.

Belongs to the histone H1/H5 family. In terms of processing, ADP-ribosylated on Ser-104 in response to DNA damage.

It localises to the nucleus. It is found in the chromosome. Its function is as follows. Histones H1 are necessary for the condensation of nucleosome chains into higher-order structures. The histones H1.0 are found in cells that are in terminal stages of differentiation or that have low rates of cell division. This is Histone H1.0 (H1-0) from Rattus norvegicus (Rat).